A 299-amino-acid chain; its full sequence is HTH-type transcriptional regulator ArgP (299 aa).

The region spanning 2-58 is the HTH lysR-type domain; the sequence is FDYKLLSALAAVIEQAGFERAAQVLGLSQSAISQRIKLLEARVGQPVLVRVTPPAPT. The H-T-H motif DNA-binding region spans 19-38; the sequence is FERAAQVLGLSQSAISQRIK.

Belongs to the LysR transcriptional regulatory family. In terms of assembly, homodimer.

Its function is as follows. Controls the transcription of genes involved in arginine and lysine metabolism. This is HTH-type transcriptional regulator ArgP from Pseudomonas fluorescens (strain ATCC BAA-477 / NRRL B-23932 / Pf-5).